Here is a 110-residue protein sequence, read N- to C-terminus: Acylphosphatase (110 aa).

Residues 21–108 form the Acylphosphatase-like domain; it reads TRRYLVTGRV…TNLKSFRIEG (88 aa). Active-site residues include Arg36 and Asn54.

Belongs to the acylphosphatase family.

The enzyme catalyses an acyl phosphate + H2O = a carboxylate + phosphate + H(+). This is Acylphosphatase (acyP) from Koribacter versatilis (strain Ellin345).